The following is a 742-amino-acid chain: Two-component response regulator-like PRR37 (742 aa).

In terms of domain architecture, Response regulatory spans 63-181; it reads KVLLVDSDDS…ELKNLWQHVW (119 aa). The segment covering 186-195 has biased composition (low complexity); that stretch reads SSSGSGSESG. Disordered regions lie at residues 186–249, 290–346, 375–402, 478–570, 590–671, and 697–742; these read SSSG…SWTK, PCTS…PLQN, DAQQ…NRDN, MKSN…VQSN, NGGS…GNDM, and NFGK…AADR. The segment covering 236–248 has biased composition (polar residues); sequence DNGSGTQAQSSWT. Residues 299–313 are compositionally biased toward basic and acidic residues; the sequence is KQKETNDDFKGKDLE. Over residues 318 to 330 the composition is skewed to polar residues; that stretch reads RNLNTAYQSSPNE. Over residues 331-341 the composition is skewed to basic and acidic residues; sequence RSIKPTDRRNE. Residues 380-390 are compositionally biased toward polar residues; it reads ARATNAPNCSS. Residues 490-502 are compositionally biased toward low complexity; the sequence is GSNGSSNNNDMGS. Polar residues predominate over residues 503–512; the sequence is TTKNVVTKPS. Residues 618–634 show a composition bias toward low complexity; the sequence is NGSNSGSNNGSNGQNGS. A compositionally biased stretch (gly residues) spans 656 to 667; the sequence is GPGGGNGSGSGS. In terms of domain architecture, CCT spans 682–724; the sequence is RVAAVIKFRQKRKERNFGKKVRYQSRKRLAEQRPRVRGQFVRQ. The span at 697-708 shows a compositional bias: basic residues; the sequence is NFGKKVRYQSRK. Low complexity predominate over residues 719–731; it reads GQFVRQAVQDQQQ.

It belongs to the ARR-like family.

Its subcellular location is the nucleus. In terms of biological role, controls photoperiodic flowering response. Seems to be one of the component of the circadian clock. Expression of several members of the ARR-like family is controlled by circadian rhythm. The particular coordinated sequential expression of PRR73, PRR37, PRR95, PRR59 and PPR1 result to circadian waves that may be at the basis of the endogenous circadian clock. In Oryza sativa subsp. indica (Rice), this protein is Two-component response regulator-like PRR37 (PRR37).